A 245-amino-acid polypeptide reads, in one-letter code: Adapter protein MecA (245 aa).

Belongs to the MecA family. In terms of assembly, homodimer.

Enables the recognition and targeting of unfolded and aggregated proteins to the ClpC protease or to other proteins involved in proteolysis. This is Adapter protein MecA from Streptococcus pneumoniae serotype 19F (strain G54).